Here is a 580-residue protein sequence, read N- to C-terminus: Extracellular protease (580 aa).

A signal peptide spans 1 to 32; sequence MSTASLRKRTGSLTILGASALTSLLLAMPAFA. Residues 33 to 136 constitute a propeptide that is removed on maturation; it reads GEVYLDGLAT…VEVDQILHAT (104 aa). The region spanning 147 to 465 is the Peptidase S8 domain; the sequence is QWAFGTTNAG…AGIVNADAAV (319 aa). Active-site charge relay system residues include aspartate 177 and histidine 237. Disulfide bonds link cysteine 225-cysteine 273 and cysteine 315-cysteine 352. The Charge relay system role is filled by serine 409. Residues cysteine 450 and cysteine 454 are joined by a disulfide bond.

It belongs to the peptidase S8 family.

Its subcellular location is the secreted. This is Extracellular protease from Xanthomonas campestris pv. campestris (strain ATCC 33913 / DSM 3586 / NCPPB 528 / LMG 568 / P 25).